Consider the following 457-residue polypeptide: uncharacterized protein (457 aa).

2 helical membrane passes run 1–21 (MVSS…MTLL) and 250–270 (ILIV…ATTF).

The protein localises to the membrane. This is an uncharacterized protein from Saccharomyces cerevisiae (strain ATCC 204508 / S288c) (Baker's yeast).